A 678-amino-acid chain; its full sequence is Beta-catenin-like protein hmp-2 (678 aa).

ARM repeat units follow at residues Arg-153–Met-192, Pro-280–Ser-319, Asp-320–Cys-359, Thr-362–Ala-403, and Glu-409–Leu-448.

Belongs to the beta-catenin family. As to quaternary structure, component of a core catenin-cadherin complex consisting of hmr-1, hmp-1 and hmp-2; the complex localizes to adherens junctions. Interacts with hmr-1; the interaction is direct. May interact with hmp-1. Interacts with frk-1. As to expression, epidermal cells.

The protein resides in the cell junction. Its subcellular location is the adherens junction. Required for cell migration during body enclosure and cell shape changes during body elongation. Plays a role in recruitment of the cadherin protein hmr-1 to adherens junctions. In Caenorhabditis elegans, this protein is Beta-catenin-like protein hmp-2 (hmp-2).